We begin with the raw amino-acid sequence, 88 residues long: CLAVATA3/ESR (CLE)-related protein 42 (88 aa).

A signal peptide spans 1–24; the sequence is MRSPHITISLVFLFFLFLIIQTHQ. The tract at residues 69–88 is disordered; it reads KMIGANEHGVPSGPNPISNR. 2 positions are modified to hydroxyproline: P79 and P82. P82 carries an O-linked (Ara...) hydroxyproline glycan.

It belongs to the CLV3/ESR signal peptide family. The O-glycosylation (arabinosylation) of the hydroxyproline Pro-82 enhances binding affinity of the CLE42p peptide for its receptor. In terms of tissue distribution, expressed at low levels in seedlings, roots and inflorescence.

Its subcellular location is the secreted. The protein resides in the extracellular space. Extracellular signal peptide that regulates cell fate. Represses tracheary element differentiation but promotes the formation of procambial cells. This Arabidopsis thaliana (Mouse-ear cress) protein is CLAVATA3/ESR (CLE)-related protein 42.